Reading from the N-terminus, the 507-residue chain is tRNA (guanine(10)-N(2))-methyltransferase TRMT11 (507 aa).

Over residues 459 to 475 the composition is skewed to basic and acidic residues; that stretch reads EKTKKKEQKKKSVENHL. The interval 459-507 is disordered; the sequence is EKTKKKEQKKKSVENHLKSKNNNDVINNNSNDTNSNNNCNNENNIENQK. A compositionally biased stretch (low complexity) spans 480-507; that stretch reads NNDVINNNSNDTNSNNNCNNENNIENQK.

It belongs to the class I-like SAM-binding methyltransferase superfamily. TRM11 methyltransferase family. As to quaternary structure, part of the heterodimeric TRMT11-TRM112 methyltransferase complex; this complex forms an active tRNA methyltransferase, where TRMT112 acts as an activator of the catalytic subunit TRMT11.

The protein resides in the cytoplasm. It catalyses the reaction guanosine(10) in tRNA + S-adenosyl-L-methionine = N(2)-methylguanosine(10) in tRNA + S-adenosyl-L-homocysteine + H(+). In terms of biological role, catalytic subunit of the TRMT11-TRM112 methyltransferase complex, that specifically mediates the S-adenosyl-L-methionine-dependent N(2)-methylation of guanosine nucleotide at position 10 (m2G10) in tRNAs. This is one of the major tRNA (guanine-N(2))-methyltransferases. This chain is tRNA (guanine(10)-N(2))-methyltransferase TRMT11 (trmt11), found in Dictyostelium discoideum (Social amoeba).